Reading from the N-terminus, the 594-residue chain is UvrABC system protein C (594 aa).

Residues 14 to 91 (DQPGCYLMKD…IKKHDPKYNI (78 aa)) enclose the GIY-YIG domain. In terms of domain architecture, UVR spans 196–231 (KEVRSELETKMYEASEKLEFERAKELRDQIAHIDAI).

It belongs to the UvrC family. In terms of assembly, interacts with UvrB in an incision complex.

The protein resides in the cytoplasm. The UvrABC repair system catalyzes the recognition and processing of DNA lesions. UvrC both incises the 5' and 3' sides of the lesion. The N-terminal half is responsible for the 3' incision and the C-terminal half is responsible for the 5' incision. The chain is UvrABC system protein C from Bacillus cereus (strain AH187).